We begin with the raw amino-acid sequence, 520 residues long: Kelch domain-containing protein 4 (520 aa).

A compositionally biased stretch (basic residues) spans 1-10 (MGKKGKKEKK). The tract at residues 1 to 33 (MGKKGKKEKKGRGAEKTAAKMEKKVSKRSRKEE) is disordered. The segment covering 11–24 (GRGAEKTAAKMEKK) has biased composition (basic and acidic residues). Kelch repeat units lie at residues 77–129 (ELIL…VVPQ), 133–187 (QLWV…AWKR), 188–241 (QLIL…VTPQ), 243–289 (GIVV…MNPS), and 308–361 (QTLF…RRGR). 3 disordered regions span residues 346-379 (QLKGPKSEKKKRRRGRKEEPEGGSRPACGGAGTQ), 402-431 (LTAPGSAGQPRSEDEDSLEEAGSPAPGPCP), and 481-520 (DPETQEWLEETDSEEDSEEVEGAEGGVDDEDSGEESGAED). Residues serine 413 and serine 418 each carry the phosphoserine modification. Residues 443–494 (VLYVYGGMFEAGDRQVTLSDLHCLDLHRMEAWKALVEMDPETQEWLEETDSE) form a Kelch 6 repeat.

The sequence is that of Kelch domain-containing protein 4 (KLHDC4) from Homo sapiens (Human).